Consider the following 635-residue polypeptide: Threonine--tRNA ligase (635 aa).

The TGS domain occupies 1–62; sequence MITITLPDGS…EHDAILRIIT (62 aa). Positions 244-535 are catalytic; that stretch reads DHRKIGKAQD…LIEHYAGIWP (292 aa). C335, H386, and H512 together coordinate Zn(2+).

It belongs to the class-II aminoacyl-tRNA synthetase family. In terms of assembly, homodimer. Zn(2+) serves as cofactor.

It localises to the cytoplasm. It carries out the reaction tRNA(Thr) + L-threonine + ATP = L-threonyl-tRNA(Thr) + AMP + diphosphate + H(+). In terms of biological role, catalyzes the attachment of threonine to tRNA(Thr) in a two-step reaction: L-threonine is first activated by ATP to form Thr-AMP and then transferred to the acceptor end of tRNA(Thr). Also edits incorrectly charged L-seryl-tRNA(Thr). In Xylella fastidiosa (strain M23), this protein is Threonine--tRNA ligase.